The following is a 344-amino-acid chain: Angiopoietin-related protein 7 (344 aa).

Positions Met-1–Pro-26 are cleaved as a signal peptide. A coiled-coil region spans residues Glu-37–Gln-116. Residue Asn-56 is glycosylated (N-linked (GlcNAc...) asparagine). The 222-residue stretch at Gln-120–Asp-341 folds into the Fibrinogen C-terminal domain. Residues Cys-129 and Cys-160 are joined by a disulfide bond. N-linked (GlcNAc...) asparagine glycosylation is found at Asn-251 and Asn-265. An intrachain disulfide couples Cys-283 to Cys-296.

Homotetramer; disulfide-linked.

The protein resides in the secreted. Has a role in the formation and organization of the extracellular matrix. In the eye, it functions as a mediator of dexamethasone-induced matrix deposition in the trabecular meshwork, the tissue responsible for the outflow of the ocular aqueous humor and for the maintenance of intraocular pressure. Is a negative regulator of angiogenesis in the cornea, and plays a major role in maintaining corneal avascularity and transparency. This Bos taurus (Bovine) protein is Angiopoietin-related protein 7 (ANGPTL7).